The primary structure comprises 317 residues: Transaldolase (317 aa).

Lys132 (schiff-base intermediate with substrate) is an active-site residue.

This sequence belongs to the transaldolase family. Type 1 subfamily. Homodimer.

The protein resides in the cytoplasm. It catalyses the reaction D-sedoheptulose 7-phosphate + D-glyceraldehyde 3-phosphate = D-erythrose 4-phosphate + beta-D-fructose 6-phosphate. It participates in carbohydrate degradation; pentose phosphate pathway; D-glyceraldehyde 3-phosphate and beta-D-fructose 6-phosphate from D-ribose 5-phosphate and D-xylulose 5-phosphate (non-oxidative stage): step 2/3. Its function is as follows. Transaldolase is important for the balance of metabolites in the pentose-phosphate pathway. The protein is Transaldolase of Pseudoalteromonas atlantica (strain T6c / ATCC BAA-1087).